A 200-amino-acid polypeptide reads, in one-letter code: Recombination protein RecR (200 aa).

The segment at 60–75 adopts a C4-type zinc-finger fold; that stretch reads CVYCQALTEDDVCNIC. In terms of domain architecture, Toprim spans 83-177; sequence TKLCIIESML…KISRIGFGVP (95 aa).

This sequence belongs to the RecR family.

Its function is as follows. May play a role in DNA repair. It seems to be involved in an RecBC-independent recombinational process of DNA repair. It may act with RecF and RecO. This is Recombination protein RecR from Francisella tularensis subsp. tularensis (strain WY96-3418).